The chain runs to 1708 residues: Rapamycin-insensitive companion of mTOR (1708 aa).

Residues 1–789 (MAAIGRGRSL…DKANLHALIQ (789 aa)) form an interaction with NBN region. Residues serine 21, serine 35, and serine 265 each carry the phosphoserine modification. Residue lysine 274 forms a Glycyl lysine isopeptide (Lys-Gly) (interchain with G-Cter in ubiquitin) linkage. Positions 521 to 570 (LKDTEEALLINLRDSQVLQHKENLDWDWNLIGTILKWPNVNLRNYKDEQL) are ribosome-binding domain. Asparagine 543, arginine 572, and arginine 576 together coordinate ATP. The span at 1021 to 1043 (TLSLNSESTSSRHNSESESAPSS) shows a compositional bias: low complexity. Residues 1021-1045 (TLSLNSESTSSRHNSESESAPSSMF) are disordered. N6-acetyllysine is present on residues lysine 1092 and lysine 1095. Disordered stretches follow at residues 1101-1198 (SLTL…ENTS) and 1218-1247 (SFNTDTTTSGISSMSSSPSRETVAVDPTAM). The residue at position 1103 (threonine 1103) is a Phosphothreonine. N6-acetyllysine is present on residues lysine 1116, lysine 1119, and lysine 1125. The residue at position 1135 (threonine 1135) is a Phosphothreonine; by RPS6KB1. A Phosphoserine modification is found at serine 1138. The span at 1147 to 1158 (FTSSSAQKSLQL) shows a compositional bias: polar residues. Residues serine 1161, serine 1218, and serine 1234 each carry the phosphoserine modification. The span at 1221–1239 (TDTTTSGISSMSSSPSRET) shows a compositional bias: low complexity. Threonine 1270 bears the Phosphothreonine mark. A phosphoserine mark is found at serine 1273, serine 1277, serine 1281, and serine 1283. Position 1294 is a phosphothreonine (threonine 1294). Serine 1301 and serine 1312 each carry phosphoserine. Threonine 1331 bears the Phosphothreonine mark. Phosphoserine occurs at positions 1345 and 1352. At threonine 1375 the chain carries Phosphothreonine. Serine 1384 carries the phosphoserine modification. Tyrosine 1385 is modified (phosphotyrosine). Residues serine 1387, serine 1395, and serine 1410 each carry the phosphoserine modification. Zn(2+)-binding residues include histidine 1514, cysteine 1519, and cysteine 1522. 4 positions are modified to phosphoserine: serine 1570, serine 1573, serine 1576, and serine 1591. Residue cysteine 1651 participates in Zn(2+) binding.

Belongs to the RICTOR family. Component of the mechanistic target of rapamycin complex 2 (mTORC2), consisting in two heterotretramers composed of MTOR, MLST8, RICTOR and MAPKAP1/SIN1. The mTORC2 core complex associates with PRR5/PROTOR1 and/or PRR5L/PROTOR2. Contrary to mTORC1, mTORC2 does not bind to and is not sensitive to FKBP12-rapamycin. Binds directly to MTOR and PRR5 within the TORC2 complex; interaction with MTOR is enhanced by deubiquitination of RICTOR by USP9X. Interaction with MAPKAP1 is not enhanced by RICTOR deubiquitination by USP9X. Interacts with CCDC28B. Interacts with NBN. Interacts with SIK3. Interacts with NCKAP1L. Interacts with ARMH4 (via cytoplasmic tail); this interaction bridges ARMH4 to the mTORC2 complex and inhibits the mTORC2 kinase activity. Interacts with UBXN2A. Interacts with TSPAN8. In terms of processing, phosphorylated by MTOR; when part of mTORC2. Phosphorylated at Thr-1135 by RPS6KB1 downstream of the mTORC1 complex: phosphorylation of RICTOR inhibits mTORC2 signaling by creating a binding site for 14-3-3 proteins. Phosphorylated at Ser-1234 by GSK3B in response to endoplasmic stress, inhibiting mTORC2 signaling. Ubiquitinated by the SCF(FBXW7) complex, leading to its degradation by the proteasome. Deubiquitinated by USP9X; deubiquitination stabilizes RICTOR and enhances its binding to MTOR, thus promoting mTORC2 complex assembly. Post-translationally, acetylated by EP300/p300 in response to glucose, leading to activate the mTORC2 complex. Acetylation by BLOC1S1/GCN5L1 in response to hypotoxic stress protects RICTOR against ubiquitination and subsequent degradation by the proteasome. Highest levels in liver and brain with expression also detected in heart, muscle, spleen and kidney (at protein level).

The protein resides in the cell membrane. It localises to the endoplasmic reticulum membrane. Its subcellular location is the lysosome membrane. Component of the mechanistic target of rapamycin complex 2 (mTORC2), which transduces signals from growth factors to pathways involved in proliferation, cytoskeletal organization, lipogenesis and anabolic output. In response to growth factors, mTORC2 phosphorylates and activates AGC protein kinase family members, including AKT (AKT1, AKT2 and AKT3), PKC (PRKCA, PRKCB and PRKCE) and SGK1. In contrast to mTORC1, mTORC2 is nutrient-insensitive. Within the mTORC2 complex, RICTOR probably acts as a molecular adapter. RICTOR is responsible for the FKBP12-rapamycin-insensitivity of mTORC2. mTORC2 plays a critical role in AKT1 activation by mediating phosphorylation of different sites depending on the context, such as 'Thr-450', 'Ser-473', 'Ser-477' or 'Thr-479', facilitating the phosphorylation of the activation loop of AKT1 on 'Thr-308' by PDPK1/PDK1 which is a prerequisite for full activation. mTORC2 catalyzes the phosphorylation of SGK1 at 'Ser-422' and of PRKCA on 'Ser-657'. The mTORC2 complex also phosphorylates various proteins involved in insulin signaling, such as FBXW8 and IGF2BP1. mTORC2 acts upstream of Rho GTPases to regulate the actin cytoskeleton, probably by activating one or more Rho-type guanine nucleotide exchange factors. mTORC2 promotes the serum-induced formation of stress-fibers or F-actin. Plays an essential role in embryonic growth and development. The sequence is that of Rapamycin-insensitive companion of mTOR from Mus musculus (Mouse).